The primary structure comprises 453 residues: Putative sodium-coupled neutral amino acid transporter 11 (453 aa).

Over residues 1–10 the composition is skewed to polar residues; sequence MSYQQPQLSG. A disordered region spans residues 1–34; that stretch reads MSYQQPQLSGPLQRETDSSDRESLISGHEHGGKS. The span at 14–32 shows a compositional bias: basic and acidic residues; it reads RETDSSDRESLISGHEHGG. The next 11 helical transmembrane spans lie at 39–59, 66–86, 106–126, 150–170, 179–199, 222–242, 262–282, 299–319, 337–357, 359–379, and 398–418; these read AVFN…PYSM, LGIL…VLLI, GFPG…IAMI, GWFI…TLPL, LGKI…IVMT, AIQA…CFLV, ILVS…TFTG, VTFG…IECF, VFHT…SLMI, CLGI…IFII, and IMAC…FVMA. Residues N438 and N443 are each glycosylated (N-linked (GlcNAc...) asparagine).

It belongs to the amino acid/polyamine transporter 2 family.

The protein resides in the membrane. Putative sodium-dependent amino acid/proton antiporter. The polypeptide is Putative sodium-coupled neutral amino acid transporter 11 (Slc38a11) (Mus musculus (Mouse)).